A 224-amino-acid chain; its full sequence is Urease accessory protein UreF (224 aa).

It belongs to the UreF family. As to quaternary structure, ureD, UreF and UreG form a complex that acts as a GTP-hydrolysis-dependent molecular chaperone, activating the urease apoprotein by helping to assemble the nickel containing metallocenter of UreC. The UreE protein probably delivers the nickel.

The protein resides in the cytoplasm. Functionally, required for maturation of urease via the functional incorporation of the urease nickel metallocenter. The polypeptide is Urease accessory protein UreF (Pseudomonas putida (strain ATCC 700007 / DSM 6899 / JCM 31910 / BCRC 17059 / LMG 24140 / F1)).